The following is a 476-amino-acid chain: H2.0-like homeobox protein (476 aa).

Disordered regions lie at residues 121–170 (HLPQ…SSKD), 328–401 (WRHS…HQTT), and 413–476 (TASS…LAGL). A compositionally biased stretch (low complexity) spans 158–168 (HHSGSAPAPSS). Residues 273-332 (RSWSRAVFSNLQRKGLEKRFEIQKYVTKPDRKQLAAMLGLTDAQVKVWFQNRRMKWRHSK) constitute a DNA-binding region (homeobox). Basic and acidic residues-rich tracts occupy residues 331–346 (SKEAQAQKDKDKEAGE) and 355–368 (EGEREERSPSRSEG). Residues 369–379 (EAESESSDSES) show a composition bias toward acidic residues. Residues 386–397 (DTERTEGTERSL) are compositionally biased toward basic and acidic residues. Residues 413–446 (TASSSASGSSFSFSSSSSLGSSNGSAGSASSLGS) show a composition bias toward low complexity. The span at 455–464 (HQPSVTSGPQ) shows a compositional bias: polar residues.

The protein belongs to the H2.0 homeobox family.

The protein resides in the nucleus. Functionally, transcription factor required for TBX21/T-bet-dependent maturation of Th1 cells as well as maintenance of Th1-specific gene expression. Involved in embryogenesis and hematopoiesis. This Rattus norvegicus (Rat) protein is H2.0-like homeobox protein (Hlx).